The chain runs to 213 residues: Ribonuclease T (213 aa).

The Exonuclease domain occupies 28–202 (VVVDVETGGF…YDTEQTARLF (175 aa)). The Mg(2+) site is built by Asp-31, Glu-33, His-189, and Asp-194. His-189 serves as the catalytic Proton donor/acceptor.

It belongs to the RNase T family. Homodimer. Mg(2+) is required as a cofactor.

Trims short 3' overhangs of a variety of RNA species, leaving a one or two nucleotide 3' overhang. Responsible for the end-turnover of tRNA: specifically removes the terminal AMP residue from uncharged tRNA (tRNA-C-C-A). Also appears to be involved in tRNA biosynthesis. The polypeptide is Ribonuclease T (Xanthomonas axonopodis pv. citri (strain 306)).